The chain runs to 254 residues: Alcohol dehydrogenase (254 aa).

10 to 33 (FVAGLGGIGFDTSREIVKSGPKNL) serves as a coordination point for NAD(+). Ser-138 contributes to the substrate binding site. The active-site Proton acceptor is the Tyr-151.

It belongs to the short-chain dehydrogenases/reductases (SDR) family. In terms of assembly, homodimer.

The enzyme catalyses a primary alcohol + NAD(+) = an aldehyde + NADH + H(+). It catalyses the reaction a secondary alcohol + NAD(+) = a ketone + NADH + H(+). In Drosophila mayaguana (Fruit fly), this protein is Alcohol dehydrogenase (Adh).